An 857-amino-acid chain; its full sequence is Bifunctional levopimaradiene synthase, chloroplastic (857 aa).

The N-terminal 33 residues, 1–33, are a transit peptide targeting the chloroplast; sequence MALPSSSLSSQIHTGATTQCIPHFHGSLNAGTS. Substrate is bound at residue Lys-257. Asp-390 and Asp-392 together coordinate Mg(2+). The DXDD motif motif lies at 390-393; the sequence is DIDD. Lys-477 is a binding site for substrate. Residues Asp-609, Asp-613, Asn-753, Thr-757, and Glu-761 each contribute to the Mg(2+) site. Residues 609–613 carry the DDXXD motif motif; it reads DDLYD.

This sequence belongs to the terpene synthase family. Tpsd subfamily. Mg(2+) serves as cofactor.

The protein localises to the plastid. Its subcellular location is the chloroplast. The catalysed reaction is (2E,6E,10E)-geranylgeranyl diphosphate = (+)-copalyl diphosphate. It carries out the reaction (+)-copalyl diphosphate = abieta-7,13-diene + diphosphate. It catalyses the reaction (+)-copalyl diphosphate = abieta-8(14),12-diene + diphosphate. The enzyme catalyses (+)-copalyl diphosphate = neoabietadiene + diphosphate. It functions in the pathway terpene metabolism; oleoresin biosynthesis. In terms of biological role, involved in defensive oleoresin formation in conifers in response to insect attack or other injury. Involved in diterpene (C20) olefins biosynthesis. Bifunctional enzyme that catalyzes two sequential cyclizations of geranylgeranyl diphosphate (GGPP) to levopimaradiene. Levopimaradiene is the major products of the enzyme with abietadiene and neoabietadiene. No activity with farnesyl diphosphate (FPP) as substrate. The polypeptide is Bifunctional levopimaradiene synthase, chloroplastic (Pinus contorta (Shore pine)).